A 323-amino-acid chain; its full sequence is tRNA U34 carboxymethyltransferase (323 aa).

Residues Lys-91, Trp-105, Lys-110, Gly-130, 152-154 (DPT), 181-182 (IE), Met-196, Tyr-200, and Arg-315 contribute to the carboxy-S-adenosyl-L-methionine site.

Belongs to the class I-like SAM-binding methyltransferase superfamily. CmoB family. Homotetramer.

The enzyme catalyses carboxy-S-adenosyl-L-methionine + 5-hydroxyuridine(34) in tRNA = 5-carboxymethoxyuridine(34) in tRNA + S-adenosyl-L-homocysteine + H(+). In terms of biological role, catalyzes carboxymethyl transfer from carboxy-S-adenosyl-L-methionine (Cx-SAM) to 5-hydroxyuridine (ho5U) to form 5-carboxymethoxyuridine (cmo5U) at position 34 in tRNAs. The polypeptide is tRNA U34 carboxymethyltransferase (Shigella boydii serotype 18 (strain CDC 3083-94 / BS512)).